Here is a 100-residue protein sequence, read N- to C-terminus: MTDDELPKTVFDDLFSVIESRRETLPDDSYTASLFAHEKGENAALEKLGEEATETILAAKDSDSAAIQAESADLIYHLFVVLAMEEITLDDLREELHGRL.

It belongs to the PRA-PH family.

The protein localises to the cytoplasm. It carries out the reaction 1-(5-phospho-beta-D-ribosyl)-ATP + H2O = 1-(5-phospho-beta-D-ribosyl)-5'-AMP + diphosphate + H(+). It functions in the pathway amino-acid biosynthesis; L-histidine biosynthesis; L-histidine from 5-phospho-alpha-D-ribose 1-diphosphate: step 2/9. In Haloquadratum walsbyi (strain DSM 16790 / HBSQ001), this protein is Phosphoribosyl-ATP pyrophosphatase.